Consider the following 238-residue polypeptide: Auxin-responsive protein IAA2 (238 aa).

Positions 24–28 (LCLGL) match the EAR-like (transcriptional repression) motif. Composition is skewed to low complexity over residues 33–44 (SSSSSSKPSEGS), 59–69 (ASKPSGAAAAA), and 85–94 (ASSSSSSSKQ). Disordered stretches follow at residues 33–69 (SSSS…AAAA) and 82–114 (RNLA…KDGG). Residues 118–216 (GMFVKINMDG…TAKRLRVLKS (99 aa)) enclose the PB1 domain. A disordered region spans residues 217 to 238 (SDLPPPSLMRAAGSRKRAAADS). Over residues 229–238 (GSRKRAAADS) the composition is skewed to basic residues.

The protein belongs to the Aux/IAA family. As to quaternary structure, homodimers and heterodimers. Highly expressed in flowers.

It localises to the nucleus. In terms of biological role, aux/IAA proteins are short-lived transcriptional factors that function as repressors of early auxin response genes at low auxin concentrations. The sequence is that of Auxin-responsive protein IAA2 (IAA2) from Oryza sativa subsp. japonica (Rice).